Consider the following 470-residue polypeptide: Ribulose bisphosphate carboxylase large chain (470 aa).

The substrate site is built by N118 and T168. K170 acts as the Proton acceptor in catalysis. Residue K172 coordinates substrate. K196, D198, and E199 together coordinate Mg(2+). K196 carries the N6-carboxylysine modification. The Proton acceptor role is filled by H289. Positions 290, 322, and 374 each coordinate substrate. Positions 459 to 465 (EIKFEFD) match the Interacts with RbcX2 motif.

It belongs to the RuBisCO large chain family. Type I subfamily. Heterohexadecamer of 8 large chains and 8 small chains; disulfide-linked. The disulfide link is formed within the large subunit homodimers. Requires Mg(2+) as cofactor. In terms of processing, the disulfide bond which can form in the large chain dimeric partners within the hexadecamer appears to be associated with oxidative stress and protein turnover.

The protein resides in the carboxysome. It carries out the reaction 2 (2R)-3-phosphoglycerate + 2 H(+) = D-ribulose 1,5-bisphosphate + CO2 + H2O. The enzyme catalyses D-ribulose 1,5-bisphosphate + O2 = 2-phosphoglycolate + (2R)-3-phosphoglycerate + 2 H(+). Functionally, ruBisCO catalyzes two reactions: the carboxylation of D-ribulose 1,5-bisphosphate, the primary event in carbon dioxide fixation, as well as the oxidative fragmentation of the pentose substrate in the photorespiration process. Both reactions occur simultaneously and in competition at the same active site. The polypeptide is Ribulose bisphosphate carboxylase large chain (Picosynechococcus sp. (strain ATCC 27264 / PCC 7002 / PR-6) (Agmenellum quadruplicatum)).